The chain runs to 308 residues: Methionyl-tRNA formyltransferase (308 aa).

109–112 provides a ligand contact to (6S)-5,6,7,8-tetrahydrofolate; the sequence is SLLP.

It belongs to the Fmt family.

The catalysed reaction is L-methionyl-tRNA(fMet) + (6R)-10-formyltetrahydrofolate = N-formyl-L-methionyl-tRNA(fMet) + (6S)-5,6,7,8-tetrahydrofolate + H(+). Attaches a formyl group to the free amino group of methionyl-tRNA(fMet). The formyl group appears to play a dual role in the initiator identity of N-formylmethionyl-tRNA by promoting its recognition by IF2 and preventing the misappropriation of this tRNA by the elongation apparatus. The protein is Methionyl-tRNA formyltransferase of Salinispora arenicola (strain CNS-205).